Reading from the N-terminus, the 1491-residue chain is Chromosome partition protein MukB (1491 aa).

34–41 (GGNGAGKS) lines the ATP pocket. 6 coiled-coil regions span residues 302-418 (LIEQ…QYQQ), 488-600 (EVAR…RFES), 638-666 (ELEKAQSMAKDKLAERRAKLDSEIERLAS), 781-806 (RAAREQRLELLREERDDVVEQHAKAS), 836-1109 (EQAL…DLRT), and 1210-1239 (VEAIEEMEVELARLTEELTQREQRLAISSD). Residues 667–784 (PGGSNDPRLK…AIPLFGRAAR (118 aa)) are flexible hinge. Positions 1059–1080 (QRRRDELQERLHTSRSRKSEYE) are disordered.

It belongs to the SMC family. MukB subfamily. Homodimerization via its hinge domain. Binds to DNA via its C-terminal region. Interacts, and probably forms a ternary complex, with MukE and MukF via its C-terminal region. The complex formation is stimulated by calcium or magnesium. Interacts with tubulin-related protein FtsZ.

The protein localises to the cytoplasm. It localises to the nucleoid. In terms of biological role, plays a central role in chromosome condensation, segregation and cell cycle progression. Functions as a homodimer, which is essential for chromosome partition. Involved in negative DNA supercoiling in vivo, and by this means organize and compact chromosomes. May achieve or facilitate chromosome segregation by condensation DNA from both sides of a centrally located replisome during cell division. The sequence is that of Chromosome partition protein MukB from Vibrio cholerae serotype O1 (strain ATCC 39541 / Classical Ogawa 395 / O395).